A 243-amino-acid chain; its full sequence is UDP-2,3-diacylglucosamine hydrolase (243 aa).

Mn(2+) is bound by residues D8, H10, D41, N79, and H114. Residue 79-80 (NR) coordinates substrate. Positions 122, 164, 167, and 195 each coordinate substrate. Mn(2+) is bound by residues H195 and H197.

It belongs to the LpxH family. The cofactor is Mn(2+).

It localises to the cell inner membrane. It carries out the reaction UDP-2-N,3-O-bis[(3R)-3-hydroxytetradecanoyl]-alpha-D-glucosamine + H2O = 2-N,3-O-bis[(3R)-3-hydroxytetradecanoyl]-alpha-D-glucosaminyl 1-phosphate + UMP + 2 H(+). It functions in the pathway glycolipid biosynthesis; lipid IV(A) biosynthesis; lipid IV(A) from (3R)-3-hydroxytetradecanoyl-[acyl-carrier-protein] and UDP-N-acetyl-alpha-D-glucosamine: step 4/6. Functionally, hydrolyzes the pyrophosphate bond of UDP-2,3-diacylglucosamine to yield 2,3-diacylglucosamine 1-phosphate (lipid X) and UMP by catalyzing the attack of water at the alpha-P atom. Involved in the biosynthesis of lipid A, a phosphorylated glycolipid that anchors the lipopolysaccharide to the outer membrane of the cell. In Vibrio vulnificus (strain CMCP6), this protein is UDP-2,3-diacylglucosamine hydrolase.